We begin with the raw amino-acid sequence, 142 residues long: ATP synthase epsilon chain (142 aa).

This sequence belongs to the ATPase epsilon chain family. F-type ATPases have 2 components, CF(1) - the catalytic core - and CF(0) - the membrane proton channel. CF(1) has five subunits: alpha(3), beta(3), gamma(1), delta(1), epsilon(1). CF(0) has three main subunits: a, b and c.

The protein resides in the cell inner membrane. Functionally, produces ATP from ADP in the presence of a proton gradient across the membrane. The chain is ATP synthase epsilon chain from Koribacter versatilis (strain Ellin345).